Here is a 211-residue protein sequence, read N- to C-terminus: Ribosomal RNA small subunit methyltransferase G (211 aa).

S-adenosyl-L-methionine is bound by residues Gly73, 125–126 (IE), and Arg141.

It belongs to the methyltransferase superfamily. RNA methyltransferase RsmG family.

It is found in the cytoplasm. The enzyme catalyses guanosine(527) in 16S rRNA + S-adenosyl-L-methionine = N(7)-methylguanosine(527) in 16S rRNA + S-adenosyl-L-homocysteine. Its function is as follows. Specifically methylates the N7 position of guanine in position 527 of 16S rRNA. This Methylobacterium radiotolerans (strain ATCC 27329 / DSM 1819 / JCM 2831 / NBRC 15690 / NCIMB 10815 / 0-1) protein is Ribosomal RNA small subunit methyltransferase G.